The following is a 502-amino-acid chain: MTTSSDSAMVNHTPSPWYKFGFKSFAEFNTYVTFVFLGMSIMMVASAVTSAPDFLTRYYVYATGDPDAVAETPLFWNNANTFYNAGTYVLQVLTELFSLTPFMRRIPLSVRLFVGLGIPFAELLLIIIVPAATIKSQHGAIAVIMVVACVGGFSKALCDSCTNALVGPFPTKFMNGAQWGLTVIALLMSIIQIILKVSMGTSFHDILTMSRIYFGICIGIQLFAIFELAILRFNPFAQKYIAEYRAGAQRNAQNNESTLEETAPSMNEPAAGDIADLPATVDDKERALNEEEGDEVRAVTSEEFHVKRGAVLTATGDADKMVDLDQTGNITSTEQLLRASAASVFKRVYPMLVCVFLIYFTSLLTFPGVFFLVSTTSGWYMTVIVTLFNAGDFISRMVLMFRPLRPSPKVVVAGTLGRLIIIPFLVLCVRGIIRGEALPYVLITLLGLTNGYFGCMACIHCPRTTTLRYAGERSLAAMLSGISIMLGLCFGSNLSLAITLTH.

At 1-30 the chain is on the cytoplasmic side; that stretch reads MTTSSDSAMVNHTPSPWYKFGFKSFAEFNT. Residues 31–51 traverse the membrane as a helical segment; the sequence is YVTFVFLGMSIMMVASAVTSA. Over 52–81 the chain is Extracellular; sequence PDFLTRYYVYATGDPDAVAETPLFWNNANT. Residues 82-102 traverse the membrane as a helical segment; that stretch reads FYNAGTYVLQVLTELFSLTPF. At 103–111 the chain is on the cytoplasmic side; sequence MRRIPLSVR. Residues 112-132 form a helical membrane-spanning segment; that stretch reads LFVGLGIPFAELLLIIIVPAA. The Extracellular portion of the chain corresponds to 133 to 137; it reads TIKSQ. The helical transmembrane segment at 138–158 threads the bilayer; it reads HGAIAVIMVVACVGGFSKALC. Residues 159–178 lie on the Cytoplasmic side of the membrane; the sequence is DSCTNALVGPFPTKFMNGAQ. The chain crosses the membrane as a helical span at residues 179 to 199; sequence WGLTVIALLMSIIQIILKVSM. Over 200–210 the chain is Extracellular; it reads GTSFHDILTMS. Residues 211 to 231 traverse the membrane as a helical segment; sequence RIYFGICIGIQLFAIFELAIL. Residues 232–352 are Cytoplasmic-facing; sequence RFNPFAQKYI…SVFKRVYPML (121 aa). A disordered region spans residues 252 to 273; it reads AQNNESTLEETAPSMNEPAAGD. A helical membrane pass occupies residues 353 to 373; the sequence is VCVFLIYFTSLLTFPGVFFLV. Topologically, residues 374–380 are extracellular; it reads STTSGWY. A helical transmembrane segment spans residues 381-401; the sequence is MTVIVTLFNAGDFISRMVLMF. Over 402 to 408 the chain is Cytoplasmic; it reads RPLRPSP. A helical membrane pass occupies residues 409 to 429; sequence KVVVAGTLGRLIIIPFLVLCV. The Extracellular segment spans residues 430 to 436; it reads RGIIRGE. The helical transmembrane segment at 437–457 threads the bilayer; that stretch reads ALPYVLITLLGLTNGYFGCMA. Residues 458–477 lie on the Cytoplasmic side of the membrane; sequence CIHCPRTTTLRYAGERSLAA. A helical membrane pass occupies residues 478 to 498; that stretch reads MLSGISIMLGLCFGSNLSLAI. Over 499–502 the chain is Extracellular; sequence TLTH.

Belongs to the SLC29A/ENT transporter (TC 2.A.57) family.

It is found in the cell membrane. The catalysed reaction is inosine(in) = inosine(out). It carries out the reaction guanosine(in) = guanosine(out). Functionally, high affinity transporter for inosine and guanosine. This Crithidia fasciculata protein is Nucleoside transporter 2.